Consider the following 445-residue polypeptide: MKQRQFFGTDGIRGKVGAGKMTPELALKLGWAAGRVLSRTGTKKVIIGKDTRISGYLFESALEAGLSAAGLNVLLVGPMPTPAVAYLTRTFRAEAGIVISASHNPYYDNGIKFFSTDGSKLDDAIELEIEAELEKPLTCVESHLLGKAKRIDDAAGRYIEYCKGNFPADQTLEGLKIVVDCAHGATYHIAPSVFSELGAEVIAIGDKPNGTNINHEVGATSMGKICETVLAEGADLGIALDGDGDRIMMVNRKGEVIDGDQILYILAADAQKRGQLKGGVVGTLMSNLGLDLALQALDIPFLRSNVGDRYVMEMLKKNDWRIGGENSGHILDLDHGTTGDGIVAGILVLAAMRRQNATLEQLVEPMKMLPQVLINVRFEGSNNPLDSDLVKSAQREVEQSLGARGRVLLRKSGTEPLIRVMVEGDDHDLVLAHANRIAAAVKLGC.

The Phosphoserine intermediate role is filled by S102. Residues S102, D241, D243, and D245 each contribute to the Mg(2+) site. S102 is modified (phosphoserine).

The protein belongs to the phosphohexose mutase family. Requires Mg(2+) as cofactor. Activated by phosphorylation.

The catalysed reaction is alpha-D-glucosamine 1-phosphate = D-glucosamine 6-phosphate. Catalyzes the conversion of glucosamine-6-phosphate to glucosamine-1-phosphate. The sequence is that of Phosphoglucosamine mutase from Shewanella denitrificans (strain OS217 / ATCC BAA-1090 / DSM 15013).